We begin with the raw amino-acid sequence, 377 residues long: Chaperone protein DnaJ 1 (377 aa).

The J domain occupies 4 to 68; sequence DYYQTLGVTR…EIRQRYDQFG (65 aa). A CR-type zinc finger spans residues 136-218; that stretch reads GGEKEIRIPH…CNGVGRKQET (83 aa). The Zn(2+) site is built by C149, C152, C166, C169, C192, C195, C206, and C209. CXXCXGXG motif repeat units lie at residues 149–156, 166–173, 192–199, and 206–213; these read CQVCEGTG, CGTCNGAG, CPTCNGSG, and CEACNGVG.

It belongs to the DnaJ family. In terms of assembly, homodimer. Zn(2+) serves as cofactor.

It is found in the cytoplasm. Functionally, participates actively in the response to hyperosmotic and heat shock by preventing the aggregation of stress-denatured proteins and by disaggregating proteins, also in an autonomous, DnaK-independent fashion. Unfolded proteins bind initially to DnaJ; upon interaction with the DnaJ-bound protein, DnaK hydrolyzes its bound ATP, resulting in the formation of a stable complex. GrpE releases ADP from DnaK; ATP binding to DnaK triggers the release of the substrate protein, thus completing the reaction cycle. Several rounds of ATP-dependent interactions between DnaJ, DnaK and GrpE are required for fully efficient folding. Also involved, together with DnaK and GrpE, in the DNA replication of plasmids through activation of initiation proteins. This Synechocystis sp. (strain ATCC 27184 / PCC 6803 / Kazusa) protein is Chaperone protein DnaJ 1.